Reading from the N-terminus, the 2347-residue chain is Proto-oncogene tyrosine-protein kinase ROS (2347 aa).

A signal peptide spans 1–27; it reads MKNIYCLIPKLVNFATLGCLWISVVQC. Residues 28–1859 are Extracellular-facing; the sequence is TVLNSCLKSC…LVGDDFWIPE (1832 aa). N-linked (GlcNAc...) asparagine glycosylation is found at asparagine 52, asparagine 114, and asparagine 123. Fibronectin type-III domains lie at 101–196 and 197–285; these read LPTA…VPET and APLI…SSSA. N-linked (GlcNAc...) asparagine glycosylation is found at asparagine 324, asparagine 352, asparagine 396, asparagine 471, asparagine 607, asparagine 628, asparagine 706, asparagine 714, asparagine 732, asparagine 939, asparagine 961, asparagine 1015, asparagine 1087, asparagine 1090, asparagine 1095, asparagine 1211, asparagine 1272, asparagine 1330, asparagine 1458, asparagine 1461, asparagine 1474, asparagine 1499, asparagine 1565, asparagine 1669, asparagine 1715, asparagine 1738, and asparagine 1808. Residues 557–671 form the Fibronectin type-III 3 domain; that stretch reads LPGRPQELSV…EPSVGTTLVP (115 aa). 2 Fibronectin type-III domains span residues 947-1042 and 1043-1150; these read IPDS…TVPS and APEN…TSEI. 4 consecutive Fibronectin type-III domains span residues 1450 to 1556, 1557 to 1656, 1658 to 1751, and 1752 to 1854; these read DTVE…TKNG, VPEA…VEMF, TPEK…TKAG, and VPNK…VGDD. A helical transmembrane segment spans residues 1860–1882; sequence TSFILTIIVGIFLVVTIPLTFVW. Topologically, residues 1883–2347 are cytoplasmic; it reads HRRLKNQKSA…THSGYGDGSD (465 aa). The Protein kinase domain maps to 1945-2222; sequence LTLRLLLGSG…DQLQLFRNFF (278 aa). ATP-binding positions include 1951-1959 and lysine 1980; that span reads LGSGAFGEV. Aspartate 2079 functions as the Proton acceptor in the catalytic mechanism. Position 2274 is a phosphotyrosine; by autocatalysis (tyrosine 2274). Residues 2284–2311 form a disordered region; the sequence is GEEKSEGPLGSQESESCGLRKEEKEPHA. Positions 2301 to 2311 are enriched in basic and acidic residues; sequence GLRKEEKEPHA. Tyrosine 2334 carries the phosphotyrosine; by autocatalysis modification.

This sequence belongs to the protein kinase superfamily. Tyr protein kinase family. Insulin receptor subfamily. In terms of assembly, interacts with PTPN6 (via SH2 1 domain); the interaction is direct and promotes ROS1 dephosphorylation. Interacts with PTPN11; may activate the PI3 kinase-mTOR signaling pathway. Interacts with VAV3; constitutive interaction mediating VAV3 phosphorylation. Phosphorylated. Probably autophosphorylates. Phosphorylation at Tyr-2274 is required for the interaction with PTPN6 that mediates ROS1 dephosphorylation. Phosphorylation at Tyr-2274 stimulates the kinase activity and the activation of the ERK1 signaling cascade. Phosphorylation at Tyr-2274 and/or Tyr-2334 recruits PTPN11. In terms of tissue distribution, expressed in brain. Expression is increased in primary gliomas.

The protein resides in the cell membrane. The catalysed reaction is L-tyrosyl-[protein] + ATP = O-phospho-L-tyrosyl-[protein] + ADP + H(+). Its activity is regulated as follows. Inhibited by dephosphorylation by PTPN6. Its function is as follows. Receptor tyrosine kinase (RTK) that plays a role in epithelial cell differentiation and regionalization of the proximal epididymal epithelium. NELL2 is an endogenous ligand for ROS1. Upon endogenous stimulation by NELL2, ROS1 activates the intracellular signaling pathway and triggers epididymal epithelial differentiation and subsequent sperm maturation. May activate several downstream signaling pathways related to cell differentiation, proliferation, growth and survival including the PI3 kinase-mTOR signaling pathway. Mediates the phosphorylation of PTPN11, an activator of this pathway. May also phosphorylate and activate the transcription factor STAT3 to control anchorage-independent cell growth. Mediates the phosphorylation and the activation of VAV3, a guanine nucleotide exchange factor regulating cell morphology. May activate other downstream signaling proteins including AKT1, MAPK1, MAPK3, IRS1 and PLCG2. This chain is Proto-oncogene tyrosine-protein kinase ROS (ROS1), found in Homo sapiens (Human).